The primary structure comprises 444 residues: Phosphoglucosamine mutase (444 aa).

The Phosphoserine intermediate role is filled by Ser102. Residues Ser102, Asp241, Asp243, and Asp245 each coordinate Mg(2+). Ser102 bears the Phosphoserine mark.

This sequence belongs to the phosphohexose mutase family. Mg(2+) is required as a cofactor. In terms of processing, activated by phosphorylation.

It carries out the reaction alpha-D-glucosamine 1-phosphate = D-glucosamine 6-phosphate. Catalyzes the conversion of glucosamine-6-phosphate to glucosamine-1-phosphate. This is Phosphoglucosamine mutase from Histophilus somni (strain 2336) (Haemophilus somnus).